We begin with the raw amino-acid sequence, 394 residues long: Cytochrome b561 and DOMON domain-containing protein At4g12980 (394 aa).

The signal sequence occupies residues 1–24 (MDSSYLRISLSFLFWALLLSPAVS). The DOMON domain occupies 49–169 (LKAILHYSYD…GKVNQVWQVG (121 aa)). A Cytochrome b561 domain is found at 184 to 381 (GPNLNSVGSL…LEVVTWVIVL (198 aa)). 2 consecutive transmembrane segments (helical) span residues 220–240 (IHGI…AMIA) and 252–272 (AWFY…VAGW). Heme b-binding residues include His221, His257, and His290. The chain crosses the membrane as a helical span at residues 292–312 (NIGICLFSIATLQMFAMLLRP). His326 is a heme b binding site. A run of 2 helical transmembrane segments spans residues 328–348 (GVGY…LSIL) and 361–381 (VIGT…VIVL).

Heme b is required as a cofactor.

The protein localises to the membrane. In terms of biological role, may act as a catecholamine-responsive trans-membrane electron transporter. This Arabidopsis thaliana (Mouse-ear cress) protein is Cytochrome b561 and DOMON domain-containing protein At4g12980.